Consider the following 431-residue polypeptide: Sulfide dehydrogenase [flavocytochrome c] flavoprotein chain (431 aa).

The segment at residues 1-30 is a signal peptide (tat-type signal); that stretch reads MTLNRRDFIKTSGAAVAAVGILGFPHLAFG. Residue 70-76 coordinates FAD; sequence YTCYLSN. An intrachain disulfide couples Cys191 to Cys367.

As to quaternary structure, dimer of one cytochrome and one flavoprotein. Predicted to be exported by the Tat system. The position of the signal peptide cleavage has been experimentally proven.

The protein resides in the periplasm. The enzyme catalyses hydrogen sulfide + 2 Fe(III)-[cytochrome c] = sulfur + 2 Fe(II)-[cytochrome c] + H(+). The polypeptide is Sulfide dehydrogenase [flavocytochrome c] flavoprotein chain (fccB) (Allochromatium vinosum (strain ATCC 17899 / DSM 180 / NBRC 103801 / NCIMB 10441 / D) (Chromatium vinosum)).